The chain runs to 287 residues: MQFLDFLIALLPALFWGSVVLINVFVGGGPYNQIRGTTLGALIVGLGLLITGFAKFNNPTVIIVGLISGALWAFGQANQLKSISLIGVSNTMPVSTGMQLVGTTLFSVIFLGEWSSMTQIIFGLIAMILLVTGVALTSLKAKNERQSDNPEFKKAMGILIVSTVGYVGFVVLGDIFGVGGTDALFFQSVGMAIGGFILSMNHKTSLKSTALNLLPGVIWGIGNLFMFYSQPKVGVATSFSLSQLLVIVSTLGGIFILGERKDRRQMTGIWAGIIIIVIAAIILGNLK.

9 helical membrane-spanning segments follow: residues leucine 7–glycine 29, isoleucine 34–phenylalanine 56, asparagine 58–glycine 75, tryptophan 114–leucine 136, methionine 156–valine 178, alanine 183–histidine 202, threonine 209–tyrosine 228, valine 233–phenylalanine 255, and threonine 267–leucine 286.

The protein belongs to the GRP transporter (TC 2.A.7.5) family.

The protein resides in the cell membrane. Its function is as follows. Involved in the uptake of glucose. This Staphylococcus aureus (strain COL) protein is Probable glucose uptake protein GlcU (glcU).